The primary structure comprises 61 residues: Small ribosomal subunit protein uS14 (61 aa).

Residues Cys24, Cys27, Cys40, and Cys43 each coordinate Zn(2+).

The protein belongs to the universal ribosomal protein uS14 family. Zinc-binding uS14 subfamily. As to quaternary structure, part of the 30S ribosomal subunit. Contacts proteins S3 and S10. It depends on Zn(2+) as a cofactor.

Its function is as follows. Binds 16S rRNA, required for the assembly of 30S particles and may also be responsible for determining the conformation of the 16S rRNA at the A site. This Maridesulfovibrio salexigens (strain ATCC 14822 / DSM 2638 / NCIMB 8403 / VKM B-1763) (Desulfovibrio salexigens) protein is Small ribosomal subunit protein uS14.